A 1179-amino-acid polypeptide reads, in one-letter code: Integrin alpha-1 (1179 aa).

Positions 1–28 (MAPRPRARPGVAVACCWLLTVVLRCCVS) are cleaved as a signal peptide. At 29–1141 (FNVDVKNSMT…SKDGLPGRVP (1113 aa)) the chain is on the extracellular side. The FG-GAP 1 repeat unit spans residues 30–91 (NVDVKNSMTF…CPVGRGESLP (62 aa)). Asparagine 74 is a glycosylation site (N-linked (GlcNAc...) asparagine). Residues cysteine 82 and cysteine 92 are joined by a disulfide bond. 9 N-linked (GlcNAc...) asparagine glycosylation sites follow: asparagine 100, asparagine 105, asparagine 112, asparagine 217, asparagine 317, asparagine 341, asparagine 402, asparagine 418, and asparagine 460. An FG-GAP 2 repeat occupies 101–160 (TSIPNVTEVKENMTFGSTLVTNPNGGFLACGPLYAYRCGHLHYTTGICSDVSPTFQVVNS). Positions 161-360 (IAPVQECSTQ…IVKTLGERIF (200 aa)) constitute a VWFA domain. The stretch at 365 to 417 (TADQSAASFEMEMSQTGFSAHYSQDWVMLGAVGAYDWNGTVVMQKASQIIIPR) is one FG-GAP 3 repeat. 4 FG-GAP repeats span residues 422-475 (NVES…DGNI), 476-538 (KILQ…RFEY), 557-615 (SCTT…TIRK), and 619-679 (QRIP…FEPN). 4 residues coordinate Ca(2+): aspartate 498, aspartate 500, aspartate 502, and aspartate 506. Asparagine 532 carries N-linked (GlcNAc...) asparagine glycosylation. The Ca(2+) site is built by aspartate 580, asparagine 582, aspartate 584, aspartate 588, aspartate 642, asparagine 644, aspartate 646, and aspartate 650. Cysteine 688 and cysteine 697 are oxidised to a cystine. 3 N-linked (GlcNAc...) asparagine glycosylation sites follow: asparagine 699, asparagine 748, and asparagine 780. Cysteine 703 and cysteine 756 are disulfide-bonded. Cysteine 808 and cysteine 814 are joined by a disulfide. Residues asparagine 840, asparagine 883, asparagine 908, asparagine 915, asparagine 939, asparagine 966, asparagine 974, and asparagine 1008 are each glycosylated (N-linked (GlcNAc...) asparagine). An intrachain disulfide couples cysteine 878 to cysteine 886. 2 disulfides stabilise this stretch: cysteine 1030–cysteine 1062 and cysteine 1065–cysteine 1072. Residues asparagine 1073, asparagine 1083, asparagine 1102, and asparagine 1113 are each glycosylated (N-linked (GlcNAc...) asparagine). A helical transmembrane segment spans residues 1142–1164 (LWVILLSAFAGLLLLMLLILALW). Residues 1165–1179 (KIGFFKRPLKKKMEK) are Cytoplasmic-facing. The short motif at 1167 to 1171 (GFFKR) is the GFFKR motif element.

This sequence belongs to the integrin alpha chain family. Heterodimer of an alpha and a beta subunit. Alpha-1 associates with beta-1. Interacts with RAB21. Interacts (via cytoplasmic domain) with PTPN2; activates PTPN2 phosphatase activity towards EGFR and negatively regulates EGF signaling.

It localises to the membrane. Functionally, integrin alpha-1/beta-1 is a receptor for laminin and collagen. It recognizes the proline-hydroxylated sequence G-F-P-G-E-R in collagen. Involved in anchorage-dependent, negative regulation of EGF-stimulated cell growth. This chain is Integrin alpha-1 (ITGA1), found in Homo sapiens (Human).